Here is a 224-residue protein sequence, read N- to C-terminus: UPF0173 metal-dependent hydrolase STH3160 (224 aa).

Belongs to the UPF0173 family.

The protein is UPF0173 metal-dependent hydrolase STH3160 of Symbiobacterium thermophilum (strain DSM 24528 / JCM 14929 / IAM 14863 / T).